The following is a 339-amino-acid chain: 4-hydroxy-2-oxovalerate aldolase 3 (339 aa).

One can recognise a Pyruvate carboxyltransferase domain in the interval 7–259; it reads IRVTDTSLRD…KTGIDFFAIA (253 aa). Residue 15–16 participates in substrate binding; sequence RD. A Mn(2+)-binding site is contributed by Asp-16. The active-site Proton acceptor is the His-19. Residues Ser-169 and His-198 each coordinate substrate. Mn(2+)-binding residues include His-198 and His-200. Residue Tyr-289 coordinates substrate.

This sequence belongs to the 4-hydroxy-2-oxovalerate aldolase family.

It carries out the reaction (S)-4-hydroxy-2-oxopentanoate = acetaldehyde + pyruvate. The chain is 4-hydroxy-2-oxovalerate aldolase 3 from Rhodococcus opacus (strain B4).